A 375-amino-acid polypeptide reads, in one-letter code: Probable aminomethyltransferase (375 aa).

The protein belongs to the GcvT family. As to quaternary structure, the glycine cleavage system is composed of four proteins: P, T, L and H.

The enzyme catalyses N(6)-[(R)-S(8)-aminomethyldihydrolipoyl]-L-lysyl-[protein] + (6S)-5,6,7,8-tetrahydrofolate = N(6)-[(R)-dihydrolipoyl]-L-lysyl-[protein] + (6R)-5,10-methylene-5,6,7,8-tetrahydrofolate + NH4(+). In terms of biological role, the glycine cleavage system catalyzes the degradation of glycine. This is Probable aminomethyltransferase from Aeropyrum pernix (strain ATCC 700893 / DSM 11879 / JCM 9820 / NBRC 100138 / K1).